Reading from the N-terminus, the 500-residue chain is MTSALQKNRPGAAFPFDNSYVGLPPHFFAAQAPTAVAEPWLIKLNEALAAELGLDVEALRRDGAAIFSGNLVPEGAEPLAMAYAGHQFGGFSPQLGDGRAILLGEVVDRSGKRYDIQLKGAGPTPFSRRGDGRAAIGPVLREYIISEAMFALGIPATRALAAVTTGEPVYREEVLPGAVFTRVAASHIRVGTFQYFAARGDTDGVRALADYVIDRHYPALKEAENPYLALFDAVCERQAALIARWLHVGFIHGVMNTDNMTVSGETIDFGPCAFMDAYDPATVFSSIDQHGRYAYANQPGIGQWNLARLGETLLPLIDAEPDSAVDKANAVIKSYGERFQAHWLAGMLEKIGLAGEEDGDLDLVQALLSLMQAQGADFTLTFRRLSDLAGDDAAEPEFAASFREPDACGAWLTQWRERLSRDPQTASERAIAMRSVNPAFIPRNHRVEQAIEAAVDNGDFSLFEALLSVLSKPYEDQPGFAAYREPPKPSERVLATFCGT.

ATP is bound by residues G96, G98, R99, K119, D131, G132, R182, and R189. D258 acts as the Proton acceptor in catalysis. Mg(2+) contacts are provided by N259 and D268. Residue D268 participates in ATP binding.

It belongs to the SELO family. Requires Mg(2+) as cofactor. The cofactor is Mn(2+).

The catalysed reaction is L-seryl-[protein] + ATP = 3-O-(5'-adenylyl)-L-seryl-[protein] + diphosphate. The enzyme catalyses L-threonyl-[protein] + ATP = 3-O-(5'-adenylyl)-L-threonyl-[protein] + diphosphate. It catalyses the reaction L-tyrosyl-[protein] + ATP = O-(5'-adenylyl)-L-tyrosyl-[protein] + diphosphate. It carries out the reaction L-histidyl-[protein] + UTP = N(tele)-(5'-uridylyl)-L-histidyl-[protein] + diphosphate. The catalysed reaction is L-seryl-[protein] + UTP = O-(5'-uridylyl)-L-seryl-[protein] + diphosphate. The enzyme catalyses L-tyrosyl-[protein] + UTP = O-(5'-uridylyl)-L-tyrosyl-[protein] + diphosphate. In terms of biological role, nucleotidyltransferase involved in the post-translational modification of proteins. It can catalyze the addition of adenosine monophosphate (AMP) or uridine monophosphate (UMP) to a protein, resulting in modifications known as AMPylation and UMPylation. The chain is Protein nucleotidyltransferase YdiU from Rhizobium johnstonii (strain DSM 114642 / LMG 32736 / 3841) (Rhizobium leguminosarum bv. viciae).